The sequence spans 488 residues: GTPase Der (488 aa).

The region spanning 3–166 (PVVALVGRPN…YALAPYAEAL (164 aa)) is the EngA-type G 1 domain. Residues 9-16 (GRPNVGKS), 56-60 (DTGGI), and 118-121 (NKVD) contribute to the GTP site. Residues 168–192 (LNRDGDDEEEKEEREYTEEEAEAEQ) are disordered. Over residues 172 to 190 (GDDEEEKEEREYTEEEAEA) the composition is skewed to acidic residues. Residues 200 to 373 (IKLAVIGKPN…SVQEAYESAT (174 aa)) enclose the EngA-type G 2 domain. Residues 206–213 (GKPNVGKS), 253–257 (DTAGV), and 318–321 (NKWD) each bind GTP. One can recognise a KH-like domain in the interval 374–458 (RRVSTSMLTR…PIQVRFQDGD (85 aa)).

Belongs to the TRAFAC class TrmE-Era-EngA-EngB-Septin-like GTPase superfamily. EngA (Der) GTPase family. As to quaternary structure, associates with the 50S ribosomal subunit.

In terms of biological role, GTPase that plays an essential role in the late steps of ribosome biogenesis. The sequence is that of GTPase Der from Shewanella woodyi (strain ATCC 51908 / MS32).